A 705-amino-acid polypeptide reads, in one-letter code: Elongation factor G (705 aa).

The region spanning 8–290 (EKYRNIGICA…GVVEYLPAPN (283 aa)) is the tr-type G domain. Residues 17–24 (AHVDAGKT), 88–92 (DTPGH), and 142–145 (NKMD) each bind GTP.

This sequence belongs to the TRAFAC class translation factor GTPase superfamily. Classic translation factor GTPase family. EF-G/EF-2 subfamily.

It localises to the cytoplasm. In terms of biological role, catalyzes the GTP-dependent ribosomal translocation step during translation elongation. During this step, the ribosome changes from the pre-translocational (PRE) to the post-translocational (POST) state as the newly formed A-site-bound peptidyl-tRNA and P-site-bound deacylated tRNA move to the P and E sites, respectively. Catalyzes the coordinated movement of the two tRNA molecules, the mRNA and conformational changes in the ribosome. This chain is Elongation factor G, found in Francisella philomiragia subsp. philomiragia (strain ATCC 25017 / CCUG 19701 / FSC 153 / O#319-036).